A 142-amino-acid chain; its full sequence is Transcription antitermination protein NusB (142 aa).

The protein belongs to the NusB family.

In terms of biological role, involved in transcription antitermination. Required for transcription of ribosomal RNA (rRNA) genes. Binds specifically to the boxA antiterminator sequence of the ribosomal RNA (rrn) operons. The polypeptide is Transcription antitermination protein NusB (Levilactobacillus brevis (strain ATCC 367 / BCRC 12310 / CIP 105137 / JCM 1170 / LMG 11437 / NCIMB 947 / NCTC 947) (Lactobacillus brevis)).